We begin with the raw amino-acid sequence, 321 residues long: MSDKKHVVVLMGGWSSEREISLLSGRHVGKALEEAGYRVTLLDMDRDIAFKLREAKPDVVFNALHGTPGEDGSIQGLMDLMAIRYTHSGLTASAIAIDKELTKKILTPENIPMPQGCLVERESLYTKDPLPRPYVLKPVNEGSSVGVAIIDESFNDGQPIRKDQIDPWKNFKTLLAEPFIKGRELTVAVMGDKALAVTELCPNNGFYDYKAKYTDGMTTHICPAKIPAEIAEKAMALSLKAHQLLGCRGPSRSDFRWDDEAGLDGLFLLEVNTQPGMTPLSLVPEQAKQLGIDYVALCRMIVEEALAEDTLQETKMAGQGG.

Residues 103 to 303 (KKILTPENIP…YVALCRMIVE (201 aa)) form the ATP-grasp domain. 129 to 186 (PLPRPYVLKPVNEGSSVGVAIIDESFNDGQPIRKDQIDPWKNFKTLLAEPFIKGRELT) lines the ATP pocket. 3 residues coordinate Mg(2+): aspartate 254, glutamate 270, and asparagine 272.

Belongs to the D-alanine--D-alanine ligase family. Mg(2+) is required as a cofactor. The cofactor is Mn(2+).

It is found in the cytoplasm. It catalyses the reaction 2 D-alanine + ATP = D-alanyl-D-alanine + ADP + phosphate + H(+). Its pathway is cell wall biogenesis; peptidoglycan biosynthesis. In terms of biological role, cell wall formation. The sequence is that of D-alanine--D-alanine ligase from Zymomonas mobilis subsp. mobilis (strain ATCC 31821 / ZM4 / CP4).